The following is a 67-amino-acid chain: uncharacterized protein (67 aa).

This is an uncharacterized protein from Bacillus subtilis (strain 168).